The primary structure comprises 66 residues: MMAEKKGKTVTVEQIGSPIRRPAEQRATLIGLGLNKMHRRSTLEDTPAVRGMIAKLPHLVRVVDEA.

This sequence belongs to the universal ribosomal protein uL30 family. As to quaternary structure, part of the 50S ribosomal subunit.

The chain is Large ribosomal subunit protein uL30 from Brucella anthropi (strain ATCC 49188 / DSM 6882 / CCUG 24695 / JCM 21032 / LMG 3331 / NBRC 15819 / NCTC 12168 / Alc 37) (Ochrobactrum anthropi).